The primary structure comprises 64 residues: DNA gyrase inhibitor YacG (64 aa).

Zn(2+) contacts are provided by Cys9, Cys12, Cys28, and Cys32. The segment at 45–64 (KRIPSSGDLSESDDWSEEPK) is disordered. Over residues 54–64 (SESDDWSEEPK) the composition is skewed to acidic residues.

Belongs to the DNA gyrase inhibitor YacG family. In terms of assembly, interacts with GyrB. The cofactor is Zn(2+).

In terms of biological role, inhibits all the catalytic activities of DNA gyrase by preventing its interaction with DNA. Acts by binding directly to the C-terminal domain of GyrB, which probably disrupts DNA binding by the gyrase. This is DNA gyrase inhibitor YacG from Escherichia fergusonii (strain ATCC 35469 / DSM 13698 / CCUG 18766 / IAM 14443 / JCM 21226 / LMG 7866 / NBRC 102419 / NCTC 12128 / CDC 0568-73).